Here is a 191-residue protein sequence, read N- to C-terminus: C-type lectin domain family 2 member D (191 aa).

At 1 to 38 the chain is on the cytoplasmic side; sequence MHDSNNVEKDITPSELPANPGCLHSKEHSIKATLIWRL. The chain crosses the membrane as a helical; Signal-anchor for type II membrane protein span at residues 39–59; the sequence is FFLIMFLTIIVCGMVAALSAI. The Extracellular segment spans residues 60–191; the sequence is RANCHQEPSV…WICSKSDIHV (132 aa). A disulfide bridge connects residues Cys-75 and Cys-86. In terms of domain architecture, C-type lectin spans 82–185; the sequence is FQRKCFYFSD…HYTERKWICS (104 aa). N-linked (GlcNAc...) asparagine glycans are attached at residues Asn-95 and Asn-147. A disulfide bond links Cys-103 and Cys-184.

In terms of assembly, homodimer; disulfide-linked. In terms of processing, N-glycosylated. As to expression, detected in peripheral blood leukocytes, osteoblasts, lymph node, thymus and spleen. Isoform 1, isoform 2 and isoform 4 are expressed in T- and B-lymphocytes, and at lower levels in NK cells. They are also expressed in B-cell lines and LPS-matured monocyte-derived dendritic cells.

It is found in the cell membrane. It localises to the endoplasmic reticulum. Its function is as follows. Receptor for KLRB1 that protects target cells against natural killer cell-mediated lysis. Inhibits osteoclast formation. Inhibits bone resorption. Modulates the release of interferon-gamma. Binds high molecular weight sulfated glycosaminoglycans. The polypeptide is C-type lectin domain family 2 member D (CLEC2D) (Homo sapiens (Human)).